The following is a 289-amino-acid chain: T-cell ecto-ADP-ribosyltransferase 2 (289 aa).

The signal sequence occupies residues 1-20 (MTSKIFKFFLTWWLTQQVTG). Intrachain disulfides connect Cys41–Cys246 and Cys141–Cys193. Residues 61-241 (EELKLEWEKA…IFLDSPERKK (181 aa)) enclose the TR mART core domain. Asn79 is a glycosylation site (N-linked (GlcNAc...) asparagine). Residues Tyr98, Arg146, and Gln164 each coordinate NAD(+). The active site involves Arg146. Ser167 is an active-site residue. An NAD(+)-binding site is contributed by Ser202. The active site involves Glu209. An N-linked (GlcNAc...) asparagine glycan is attached at Asn249. A lipid anchor (GPI-anchor amidated serine) is attached at Ser260. A propeptide spans 261-289 (ISGSRESCVSLFLVVLLGLLVQQLTLAEL) (removed in mature form).

This sequence belongs to the Arg-specific ADP-ribosyltransferase family. As to expression, expressed in spleen, intestine and thymus.

The protein localises to the cell membrane. It catalyses the reaction L-arginyl-[protein] + NAD(+) = N(omega)-(ADP-D-ribosyl)-L-arginyl-[protein] + nicotinamide + H(+). The enzyme catalyses NAD(+) + H2O = ADP-D-ribose + nicotinamide + H(+). Its function is as follows. Has both NAD(+) glycohydrolase and ADP-ribosyltransferase activity. This is T-cell ecto-ADP-ribosyltransferase 2 (Art2b) from Mus musculus (Mouse).